The primary structure comprises 670 residues: Nitrate import ATP-binding protein NrtC (670 aa).

The 235-residue stretch at 5-239 (IEIDHVDRIF…RPRHRLEVVN (235 aa)) folds into the ABC transporter domain. 42–49 (GHSGCGKS) is an ATP binding site. Residues 255 to 278 (NQQKRAKKVGAVSQFAEAMGGNGL) form a linker region. The tract at residues 279–670 (EKINLDLGFI…LIDQIDQVNQ (392 aa)) is nrtA-like.

The protein belongs to the ABC transporter superfamily. Nitrate/nitrite/cyanate uptake transporter (NitT) (TC 3.A.1.16) family. In terms of assembly, the complex is composed of two ATP-binding proteins (NrtC and NrtD), two transmembrane proteins (NrtB) and a solute-binding protein (NrtA).

The protein localises to the cell inner membrane. The enzyme catalyses nitrate(out) + ATP + H2O = nitrate(in) + ADP + phosphate + H(+). Its function is as follows. Part of the ABC transporter complex NrtABCD involved in nitrate uptake. The complex is probably also involved in nitrite transport. Probably responsible for energy coupling to the transport system. This chain is Nitrate import ATP-binding protein NrtC (nrtC), found in Synechocystis sp. (strain ATCC 27184 / PCC 6803 / Kazusa).